Consider the following 132-residue polypeptide: MDKVSYIGPVILDEPEEFSLSEFARQVVAMEAERLYYSNGRIFFIEYDTIHGILDDRLVIVELITYTSFTTVGEYRNWIVYYGNDDTAEYVEKIKDLRGDMTIIPVLRTHDRFIRKIEEQISKGQFRSFASQ.

This is an uncharacterized protein from Archaeoglobus fulgidus (strain ATCC 49558 / DSM 4304 / JCM 9628 / NBRC 100126 / VC-16).